The primary structure comprises 208 residues: N-(5'-phosphoribosyl)anthranilate isomerase (208 aa).

Belongs to the TrpF family.

It carries out the reaction N-(5-phospho-beta-D-ribosyl)anthranilate = 1-(2-carboxyphenylamino)-1-deoxy-D-ribulose 5-phosphate. Its pathway is amino-acid biosynthesis; L-tryptophan biosynthesis; L-tryptophan from chorismate: step 3/5. This Methanococcus maripaludis (strain C7 / ATCC BAA-1331) protein is N-(5'-phosphoribosyl)anthranilate isomerase.